Reading from the N-terminus, the 283-residue chain is Formamidopyrimidine-DNA glycosylase (283 aa).

P2 serves as the catalytic Schiff-base intermediate with DNA. E3 (proton donor) is an active-site residue. K61 serves as the catalytic Proton donor; for beta-elimination activity. 3 residues coordinate DNA: H94, R113, and K159. The segment at 245-279 (DAYGREGESCRRCGAVMRREKFMNRSSFYCPKCQP) adopts an FPG-type zinc-finger fold. Catalysis depends on R269, which acts as the Proton donor; for delta-elimination activity.

It belongs to the FPG family. As to quaternary structure, monomer. Zn(2+) serves as cofactor.

The catalysed reaction is Hydrolysis of DNA containing ring-opened 7-methylguanine residues, releasing 2,6-diamino-4-hydroxy-5-(N-methyl)formamidopyrimidine.. It carries out the reaction 2'-deoxyribonucleotide-(2'-deoxyribose 5'-phosphate)-2'-deoxyribonucleotide-DNA = a 3'-end 2'-deoxyribonucleotide-(2,3-dehydro-2,3-deoxyribose 5'-phosphate)-DNA + a 5'-end 5'-phospho-2'-deoxyribonucleoside-DNA + H(+). Functionally, involved in base excision repair of DNA damaged by oxidation or by mutagenic agents. Acts as a DNA glycosylase that recognizes and removes damaged bases. Has a preference for oxidized purines, such as 7,8-dihydro-8-oxoguanine (8-oxoG). Has AP (apurinic/apyrimidinic) lyase activity and introduces nicks in the DNA strand. Cleaves the DNA backbone by beta-delta elimination to generate a single-strand break at the site of the removed base with both 3'- and 5'-phosphates. The sequence is that of Formamidopyrimidine-DNA glycosylase from Mycobacterium avium (strain 104).